A 246-amino-acid chain; its full sequence is Flagellar L-ring protein (246 aa).

An N-terminal signal peptide occupies residues Met-1 to Ala-20. A lipid anchor (N-palmitoyl cysteine) is attached at Cys-21. Cys-21 carries the S-diacylglycerol cysteine lipid modification.

The protein belongs to the FlgH family. The basal body constitutes a major portion of the flagellar organelle and consists of four rings (L,P,S, and M) mounted on a central rod.

The protein localises to the cell outer membrane. It is found in the bacterial flagellum basal body. In terms of biological role, assembles around the rod to form the L-ring and probably protects the motor/basal body from shearing forces during rotation. This Ruegeria pomeroyi (strain ATCC 700808 / DSM 15171 / DSS-3) (Silicibacter pomeroyi) protein is Flagellar L-ring protein.